The primary structure comprises 302 residues: tRNA dimethylallyltransferase 2 (302 aa).

Position 6 to 13 (6 to 13) interacts with ATP; the sequence is GPTACGKT. 8–13 is a binding site for substrate; it reads TACGKT. 2 interaction with substrate tRNA regions span residues 31–34 and 154–158; these read DSRQ and QRAIR.

The protein belongs to the IPP transferase family. As to quaternary structure, monomer. Mg(2+) serves as cofactor.

The enzyme catalyses adenosine(37) in tRNA + dimethylallyl diphosphate = N(6)-dimethylallyladenosine(37) in tRNA + diphosphate. Catalyzes the transfer of a dimethylallyl group onto the adenine at position 37 in tRNAs that read codons beginning with uridine, leading to the formation of N6-(dimethylallyl)adenosine (i(6)A). The sequence is that of tRNA dimethylallyltransferase 2 from Porphyromonas gingivalis (strain ATCC BAA-308 / W83).